The following is a 251-amino-acid chain: Probable transcriptional regulatory protein CT1665 (251 aa).

It belongs to the TACO1 family.

Its subcellular location is the cytoplasm. The chain is Probable transcriptional regulatory protein CT1665 from Chlorobaculum tepidum (strain ATCC 49652 / DSM 12025 / NBRC 103806 / TLS) (Chlorobium tepidum).